The sequence spans 419 residues: UDP-N-acetylglucosamine 1-carboxyvinyltransferase (419 aa).

22–23 contributes to the phosphoenolpyruvate binding site; sequence KN. Position 93 (Arg-93) interacts with UDP-N-acetyl-alpha-D-glucosamine. The Proton donor role is filled by Cys-117. Cys-117 is modified (2-(S-cysteinyl)pyruvic acid O-phosphothioketal). Residues Asp-307 and Ile-329 each contribute to the UDP-N-acetyl-alpha-D-glucosamine site.

It belongs to the EPSP synthase family. MurA subfamily.

The protein localises to the cytoplasm. It carries out the reaction phosphoenolpyruvate + UDP-N-acetyl-alpha-D-glucosamine = UDP-N-acetyl-3-O-(1-carboxyvinyl)-alpha-D-glucosamine + phosphate. It functions in the pathway cell wall biogenesis; peptidoglycan biosynthesis. Functionally, cell wall formation. Adds enolpyruvyl to UDP-N-acetylglucosamine. This chain is UDP-N-acetylglucosamine 1-carboxyvinyltransferase, found in Shewanella sp. (strain ANA-3).